Here is a 570-residue protein sequence, read N- to C-terminus: Multidrug and toxin extrusion protein 1 (570 aa).

Methionine 1 carries the N-acetylmethionine modification. At 1 to 37 (MEAPEEPAPVRGGPEATLEVRGSRCLRLSAFREELRA) the chain is on the cytoplasmic side. Residues 38 to 58 (LLVLAGPAFLVQLMVFLISFI) traverse the membrane as a helical segment. At 59–72 (SSVFCGHLGKLELD) the chain is on the extracellular side. A helical transmembrane segment spans residues 73–93 (AVTLAIAVINVTGVSVGFGLS). The Cytoplasmic portion of the chain corresponds to 94 to 123 (SACDTLISQTYGSQNLKHVGVILQRSALVL). A helical membrane pass occupies residues 124-144 (LLCCFPCWALFLNTQHILLLF). At 145 to 152 (RQDPDVSR) the chain is on the extracellular side. Residues 153-173 (LTQTYVTIFIPALPATFLYML) traverse the membrane as a helical segment. Topologically, residues 174-176 (QVK) are cytoplasmic. The helical transmembrane segment at 177–197 (YLLNQGIVLPQIVTGVAANLV) threads the bilayer. The Extracellular segment spans residues 198 to 216 (NALANYLFLHQLHLGVIGS). The helical transmembrane segment at 217 to 237 (ALANLISQYTLALLLFLYILG) threads the bilayer. The Cytoplasmic segment spans residues 238 to 256 (KKLHQATWGGWSLECLQDW). The helical transmembrane segment at 257–276 (ASFLRLAIPSMLMLCMEWWA) threads the bilayer. Residues 277-295 (YEVGSFLSGILGMVELGAQ) are Extracellular-facing. The helical transmembrane segment at 296 to 316 (SIVYELAIIVYMVPAGFSVAA) threads the bilayer. The Cytoplasmic portion of the chain corresponds to 317–336 (SVRVGNALGAGDMEQARKSS). The helical transmembrane segment at 337 to 357 (TVSLLITVLFAVAFSVLLLSC) threads the bilayer. The Extracellular segment spans residues 358-370 (KDHVGYIFTTDRD). A helical transmembrane segment spans residues 371 to 391 (IINLVAQVVPIYAVSHLFEAL). Residues 392-408 (ACTSGGVLRGSGNQKVG) are Cytoplasmic-facing. Residues 409 to 429 (AIVNTIGYYVVGLPIGIALMF) form a helical membrane-spanning segment. Residues 430-437 (ATTLGVMG) are Extracellular-facing. A helical membrane pass occupies residues 438–458 (LWSGIIICTVFQAVCFLGFII). Over 459–546 (QLNWKKACQQ…LSRKQLVLRR (88 aa)) the chain is Cytoplasmic. The segment at 508 to 534 (DVGKTGEPQSDQQMRQEEPLPEHPQDG) is disordered. A compositionally biased stretch (basic and acidic residues) spans 521–533 (MRQEEPLPEHPQD). A helical membrane pass occupies residues 547–567 (GLLLLGVFLILLVGILVRFYV). At 568 to 570 (RIQ) the chain is on the extracellular side.

This sequence belongs to the multi antimicrobial extrusion (MATE) (TC 2.A.66.1) family. In terms of tissue distribution, widely expressed. The highest expression is found in adrenal gland, and to a lower extent in liver, skeletal muscle and kidney. In testis, primarily localized throughout the adluminal compartment of the seminiferous tubules with expression at the peritubular myoid cells and Leydig cells.

The protein resides in the cell membrane. The protein localises to the apical cell membrane. It carries out the reaction thiamine(out) + H(+)(in) = thiamine(in) + H(+)(out). It catalyses the reaction estrone 3-sulfate(in) + H(+)(out) = estrone 3-sulfate(out) + H(+)(in). The enzyme catalyses creatinine(in) + H(+)(out) = creatinine(out) + H(+)(in). The catalysed reaction is agmatine(in) + H(+)(out) = agmatine(out) + H(+)(in). In terms of biological role, multidrug efflux pump that functions as a H(+)/organic cation antiporter. Plays a physiological role in the excretion of cationic compounds including endogenous metabolites, drugs, toxins through the kidney and liver, into urine and bile respectively. Mediates the efflux of endogenous compounds such as creatinine, vitamin B1/thiamine, agmatine and estrone-3-sulfate. May also contribute to regulate the transport of cationic compounds in testis across the blood-testis-barrier. The chain is Multidrug and toxin extrusion protein 1 from Homo sapiens (Human).